Consider the following 2293-residue polypeptide: Protein Ycf2 A (2293 aa).

Position 1647-1654 (1647-1654 (GSIGTGRS)) interacts with ATP.

It belongs to the Ycf2 family.

It is found in the plastid. Its subcellular location is the chloroplast stroma. Its function is as follows. Probable ATPase of unknown function. Its presence in a non-photosynthetic plant (Epifagus virginiana) and experiments in tobacco indicate that it has an essential function which is probably not related to photosynthesis. This chain is Protein Ycf2 A, found in Crucihimalaya wallichii (Rock-cress).